A 348-amino-acid polypeptide reads, in one-letter code: Uroporphyrinogen decarboxylase (348 aa).

Residues 24 to 28 (RQAGR), Asp-73, Tyr-150, Ser-205, and His-324 each bind substrate.

The protein belongs to the uroporphyrinogen decarboxylase family. In terms of assembly, homodimer.

The protein localises to the cytoplasm. The enzyme catalyses uroporphyrinogen III + 4 H(+) = coproporphyrinogen III + 4 CO2. It participates in porphyrin-containing compound metabolism; protoporphyrin-IX biosynthesis; coproporphyrinogen-III from 5-aminolevulinate: step 4/4. Its function is as follows. Catalyzes the decarboxylation of four acetate groups of uroporphyrinogen-III to yield coproporphyrinogen-III. The sequence is that of Uroporphyrinogen decarboxylase from Roseiflexus sp. (strain RS-1).